Reading from the N-terminus, the 938-residue chain is Isoleucine--tRNA ligase (938 aa).

Positions 58–68 (PYANGHLHMGH) match the 'HIGH' region motif. L-isoleucyl-5'-AMP is bound at residue Glu566. The short motif at 607–611 (KMSKS) is the 'KMSKS' region element. Position 610 (Lys610) interacts with ATP. Positions 906, 909, 926, and 929 each coordinate Zn(2+).

This sequence belongs to the class-I aminoacyl-tRNA synthetase family. IleS type 1 subfamily. As to quaternary structure, monomer. Zn(2+) is required as a cofactor.

Its subcellular location is the cytoplasm. The catalysed reaction is tRNA(Ile) + L-isoleucine + ATP = L-isoleucyl-tRNA(Ile) + AMP + diphosphate. Catalyzes the attachment of isoleucine to tRNA(Ile). As IleRS can inadvertently accommodate and process structurally similar amino acids such as valine, to avoid such errors it has two additional distinct tRNA(Ile)-dependent editing activities. One activity is designated as 'pretransfer' editing and involves the hydrolysis of activated Val-AMP. The other activity is designated 'posttransfer' editing and involves deacylation of mischarged Val-tRNA(Ile). This Desulfovibrio desulfuricans (strain ATCC 27774 / DSM 6949 / MB) protein is Isoleucine--tRNA ligase.